A 481-amino-acid polypeptide reads, in one-letter code: 3-isopropylmalate dehydratase large subunit (481 aa).

Residues Cys-363, Cys-423, and Cys-426 each contribute to the [4Fe-4S] cluster site. The tract at residues 437-463 is disordered; it reads GQRAASTSNRNFEGRQGRGGRTHLVSP.

It belongs to the aconitase/IPM isomerase family. LeuC type 1 subfamily. As to quaternary structure, heterodimer of LeuC and LeuD. Requires [4Fe-4S] cluster as cofactor.

It catalyses the reaction (2R,3S)-3-isopropylmalate = (2S)-2-isopropylmalate. It functions in the pathway amino-acid biosynthesis; L-leucine biosynthesis; L-leucine from 3-methyl-2-oxobutanoate: step 2/4. In terms of biological role, catalyzes the isomerization between 2-isopropylmalate and 3-isopropylmalate, via the formation of 2-isopropylmaleate. The polypeptide is 3-isopropylmalate dehydratase large subunit (Salinispora arenicola (strain CNS-205)).